A 289-amino-acid chain; its full sequence is Xylosylprotein 4-beta-galactosyltransferase (289 aa).

At 1–6 the chain is on the cytoplasmic side; that stretch reads MKLKTR. The helical; Signal-anchor for type II membrane protein transmembrane segment at 7 to 27 threads the bilayer; that stretch reads LILSGTILISLAACYFLVLLV. The Lumenal segment spans residues 28–289; sequence LDLEITRDLM…DLNWTPYCKS (262 aa). Residue 58–62 coordinates UDP-alpha-D-galactose; the sequence is PYRDR. N-linked (GlcNAc...) asparagine glycans are attached at residues Asn-81 and Asn-90. UDP-alpha-D-galactose contacts are provided by residues 97 to 99, 123 to 124, Tyr-154, and Trp-184; these read FNR and VD. Mn(2+) is bound at residue Asp-124. 186–189 contributes to the N-acetyl-D-glucosamine binding site; that stretch reads LEDD. N-linked (GlcNAc...) asparagine glycosylation occurs at Asn-201. The tract at residues 214 to 236 is disordered; it reads NTFRHIHGPKRKRDYTPKKNDKN. Positions 217-226 are enriched in basic residues; it reads RHIHGPKRKR. His-218 serves as a coordination point for Mn(2+). Position 218–220 (218–220) interacts with UDP-alpha-D-galactose; that stretch reads HIH. Over residues 227–236 the composition is skewed to basic and acidic residues; sequence DYTPKKNDKN.

Belongs to the glycosyltransferase 7 family. Requires Mn(2+) as cofactor.

It is found in the membrane. The enzyme catalyses 3-O-(beta-D-xylosyl)-L-seryl-[protein] + UDP-alpha-D-galactose = 3-O-(beta-D-galactosyl-(1-&gt;4)-beta-D-xylosyl)-L-seryl-[protein] + UDP + H(+). The protein operates within protein modification; protein glycosylation. In terms of biological role, glycosyltransferase required for the biosynthesis of the tetrasaccharide (GlcA-Gal-Gal-Xyl-)Ser core linker of heparan sulfate and chondroitin sulfate. Required for embryonic development. Involved in vulval epithelium invagination. Required for axon regeneration after injury. The chain is Xylosylprotein 4-beta-galactosyltransferase (sqv-3) from Caenorhabditis elegans.